A 2524-amino-acid chain; its full sequence is Neurogenic locus notch homolog protein 1 (2524 aa).

The N-terminal stretch at 1 to 19 is a signal peptide; it reads MDRIGLAVLLCSLPVLTQG. EGF-like domains lie at 20-57, 58-99, 102-140, and 141-177; these read LRCTQTAEMCLNGGRCEMTPGGTGVCLCGNLYFGERCQ, FPNP…KVCL, VDNACVNNPCRNGGTCELLNSVTEYKCRCPPGWTGDSCQ, and QADPCASNPCANGGKCLPFEIQYICKCPPGFHGATCK. Residues 20–1729 lie on the Extracellular side of the membrane; that stretch reads LRCTQTAEMC…METPKPSTLY (1710 aa). 33 disulfide bridges follow: Cys-22-Cys-35, Cys-29-Cys-45, Cys-47-Cys-56, Cys-62-Cys-74, Cys-68-Cys-87, Cys-89-Cys-98, Cys-106-Cys-117, Cys-111-Cys-128, Cys-130-Cys-139, Cys-145-Cys-156, Cys-150-Cys-165, Cys-167-Cys-176, Cys-183-Cys-194, Cys-188-Cys-203, Cys-205-Cys-214, Cys-221-Cys-232, Cys-226-Cys-242, Cys-244-Cys-253, Cys-260-Cys-271, Cys-265-Cys-280, Cys-282-Cys-291, Cys-298-Cys-311, Cys-305-Cys-320, Cys-322-Cys-331, Cys-338-Cys-349, Cys-343-Cys-358, Cys-360-Cys-369, Cys-375-Cys-386, Cys-380-Cys-397, Cys-399-Cys-408, Cys-415-Cys-428, Cys-422-Cys-437, and Cys-439-Cys-448. One can recognise an EGF-like 5; calcium-binding domain in the interval 179–215; sequence DINECSQNPCKNGGQCINEFGSYRCTCQNRFTGRNCD. Residues 217–254 form the EGF-like 6 domain; it reads PYVPCNPSPCLNGGTCRQTDDTSYDCTCLPGFSGQNCE. An O-linked (Fuc...) threonine; alternate glycan is attached at Thr-231. The O-linked (GalNAc...) threonine; alternate glycan is linked to Thr-231. The EGF-like 7; calcium-binding domain maps to 256 to 292; that stretch reads NIDDCPSNNCRNGGTCVDGVNTYNCQCPPDWTGQYCT. Residues 294-332 form the EGF-like 8; calcium-binding domain; that stretch reads DVDECQLMPNACQNGGTCHNTYGGYNCVCVNGWTGEDCS. An EGF-like 9; calcium-binding domain is found at 334–370; sequence NIDDCANAACHSGATCHDRVASFYCECPHGRTGLLCH. Positions 371-409 constitute an EGF-like 10 domain; sequence LDNACISNPCNEGSNCDTNPVNGKAICTCPPGYTGPACN. Positions 411-449 constitute an EGF-like 11; calcium-binding domain; it reads DVDECSLGANPCEHGGRCTNTLGSFQCNCPQGYAGPRCE. Residues Thr-431 and Ser-434 each coordinate Ca(2+). Ser-434 carries O-linked (Glc...) serine glycosylation. Ca(2+) contacts are provided by Asp-451, Val-452, and Glu-454. One can recognise an EGF-like 12; calcium-binding domain in the interval 451–487; sequence DVNECLSNPCQNDSTCLDQIGEFQCICMPGYEGLYCE. Intrachain disulfides connect Cys-455/Cys-466, Cys-460/Cys-475, and Cys-477/Cys-486. O-linked (Glc...) serine glycosylation occurs at Ser-457. The N-linked (GlcNAc...) asparagine glycan is linked to Asn-462. Thr-465 carries O-linked (Fuc...) threonine glycosylation. The Ca(2+) site is built by Asp-468 and Gln-469. Residues Asn-489, Ile-490, and Glu-492 each contribute to the Ca(2+) site. The EGF-like 13; calcium-binding domain maps to 489–525; the sequence is NIDECASNPCLHNGKCIDKINEFRCDCPTGFSGNLCQ. 75 disulfides stabilise this stretch: Cys-493/Cys-504, Cys-498/Cys-513, Cys-515/Cys-524, Cys-531/Cys-542, Cys-536/Cys-551, Cys-553/Cys-562, Cys-569/Cys-579, Cys-574/Cys-588, Cys-590/Cys-599, Cys-606/Cys-617, Cys-611/Cys-626, Cys-628/Cys-637, Cys-644/Cys-654, Cys-649/Cys-663, Cys-665/Cys-674, Cys-681/Cys-692, Cys-686/Cys-701, Cys-703/Cys-712, Cys-719/Cys-729, Cys-724/Cys-738, Cys-740/Cys-749, Cys-756/Cys-767, Cys-761/Cys-776, Cys-778/Cys-787, Cys-794/Cys-805, Cys-799/Cys-814, Cys-816/Cys-825, Cys-832/Cys-843, Cys-837/Cys-854, Cys-856/Cys-865, Cys-872/Cys-883, Cys-877/Cys-892, Cys-894/Cys-903, Cys-910/Cys-921, Cys-915/Cys-930, Cys-932/Cys-941, Cys-948/Cys-959, Cys-953/Cys-968, Cys-970/Cys-979, Cys-986/Cys-997, Cys-991/Cys-1006, Cys-1008/Cys-1017, Cys-1024/Cys-1035, Cys-1029/Cys-1044, Cys-1046/Cys-1055, Cys-1062/Cys-1073, Cys-1067/Cys-1082, Cys-1084/Cys-1093, Cys-1100/Cys-1121, Cys-1115/Cys-1130, Cys-1132/Cys-1141, Cys-1148/Cys-1159, Cys-1153/Cys-1168, Cys-1170/Cys-1179, Cys-1186/Cys-1197, Cys-1191/Cys-1206, Cys-1208/Cys-1217, Cys-1224/Cys-1243, Cys-1237/Cys-1252, Cys-1254/Cys-1263, Cys-1270/Cys-1283, Cys-1275/Cys-1292, Cys-1294/Cys-1303, Cys-1310/Cys-1321, Cys-1315/Cys-1333, Cys-1335/Cys-1344, Cys-1351/Cys-1362, Cys-1356/Cys-1371, Cys-1373/Cys-1382, Cys-1390/Cys-1401, Cys-1395/Cys-1412, Cys-1414/Cys-1423, Cys-1447/Cys-1470, Cys-1452/Cys-1465, and Cys-1461/Cys-1477. O-linked (Glc...) serine glycosylation is present at Ser-495. Ca(2+) contacts are provided by Asp-506 and Lys-507. The 37-residue stretch at 527–563 folds into the EGF-like 14; calcium-binding domain; sequence DFDECTSTPCKNGAKCLDGPNSYTCQCTEGFTGRHCE. Positions 565-600 constitute an EGF-like 15; calcium-binding domain; that stretch reads DINECIPDPCHYGTCKDGIATFTCLCRPGYTGRLCD. The region spanning 602–638 is the EGF-like 16; calcium-binding domain; sequence DINECLSKPCLNGGQCTDRENGYICTCPKGTTGVNCE. Residues 640–675 form the EGF-like 17 domain; it reads KIDDCASNLCDNGKCIDKIDGYECTCEPGYTGKLCN. An EGF-like 18; calcium-binding domain is found at 677-713; sequence NINECDSNPCRNGGTCKDQINGFTCVCPDGYHDHMCL. Positions 715–750 constitute an EGF-like 19; calcium-binding domain; sequence EVNECNSNPCIHGACHDGVNGYKCDCEAGWSGSNCD. The region spanning 752–788 is the EGF-like 20; calcium-binding domain; it reads NNNECESNPCMNGGTCKDMTGAYICTCKAGFSGPNCQ. The region spanning 790 to 826 is the EGF-like 21; calcium-binding domain; it reads NINECSSNPCLNHGTCIDDVAGYKCNCMLPYTGAICE. In terms of domain architecture, EGF-like 22 spans 828–866; that stretch reads VLAPCAGSPCKNGGRCKESEDFETFSCECPPGWQGQTCE. Residues 868-904 form the EGF-like 23; calcium-binding domain; sequence DMNECVNRPCRNGATCQNTNGSYKCNCKPGYTGRNCE. Asn-887 carries an N-linked (GlcNAc...) asparagine glycan. An EGF-like 24; calcium-binding domain is found at 906-942; sequence DIDDCQPNPCHNGGSCSDGINMFFCNCPAGFRGPKCE. The 37-residue stretch at 944 to 980 folds into the EGF-like 25; calcium-binding domain; the sequence is DINECASNPCKNGANCTDCVNSYTCTCQPGFSGIHCE. Asn-958 carries N-linked (GlcNAc...) asparagine glycosylation. Residues 982–1018 enclose the EGF-like 26 domain; it reads NTPDCTESSCFNGGTCIDGINTFTCQCPPGFTGSYCQ. The 37-residue stretch at 1020-1056 folds into the EGF-like 27; calcium-binding domain; that stretch reads DINECDSKPCLNGGTCQDSYGTYKCTCPQGYTGLNCQ. EGF-like domains are found at residues 1058-1094 and 1096-1142; these read LVRWCDSSPCKNGGKCWQTNNFYRCECKSGWTGVYCD and PSVS…SYCE. The EGF-like 30; calcium-binding domain occupies 1144-1180; it reads QVDECSPNPCQNGATCTDYLGGYSCECVAGYHGVNCS. N-linked (GlcNAc...) asparagine glycosylation is present at Asn-1178. Residues 1182 to 1218 enclose the EGF-like 31; calcium-binding domain; sequence EINECLSHPCQNGGTCIDLINTYKCSCPRGTQGVHCE. An EGF-like 32; calcium-binding domain is found at 1220-1264; sequence NVDDCTPFYDSFTLEPKCFNNGKCIDRVGGYNCICPPGFVGERCE. EGF-like domains lie at 1266-1304, 1306-1346, 1347-1383, and 1386-1424; these read DVNECLSNPCDSRGTQNCIQLVNDYRCECRQGFTGRRCE, VVDG…TCEY, DSRTCSNLRCQNGGTCISVLTSSKCVCSEGYTGATCQ, and VISPCASHPCYNGGTCQFFAEEPFFQCFCPKNFNGLFCH. An O-linked (Fuc...) threonine; alternate glycan is attached at Thr-1400. O-linked (GalNAc...) threonine; alternate glycosylation is present at Thr-1400. LNR repeat units follow at residues 1447 to 1487, 1488 to 1529, and 1530 to 1564; these read CENE…PWKN, CTQS…CNPL, and YDQYCKDHFQDGHCDQGCNNAECEWDGLDCANMPE. N-linked (GlcNAc...) asparagine glycosylation is present at Asn-1487. 5 cysteine pairs are disulfide-bonded: Cys-1488–Cys-1512, Cys-1494–Cys-1507, Cys-1503–Cys-1519, Cys-1534–Cys-1547, and Cys-1543–Cys-1559. N-linked (GlcNAc...) asparagine glycosylation is present at Asn-1508. A glycan (N-linked (GlcNAc...) asparagine) is linked at Asn-1584. The chain crosses the membrane as a helical span at residues 1730 to 1750; sequence PMLSMLVIPLLIIFVFMMVIV. At 1751 to 2524 the chain is on the cytoplasmic side; that stretch reads NKKRRREHGQ…QRTHIPEAFK (774 aa). ANK repeat units follow at residues 1876 to 1919, 1924 to 1953, 1957 to 1987, 1991 to 2020, 2024 to 2053, and 2057 to 2086; these read DGFT…QLHN, TGETALHLAARYARADAAKRLLESSADANV, MGRTPLHAAVAADAQGVFQILIRNRATDLDA, DGTTPLILAARLAVEGMVEELINAHADVNA, FGKSALHWAAAVNNVDAAAVLLKNSANKDM, and KEETSLFLAAREGSYETAKVLLDHYANRDI. 3 disordered regions span residues 2144–2230, 2369–2407, and 2451–2524; these read NMKP…LNHL, MQAQQMQQQQNLQLHQSMQQQHHNSSTTSTHINSPFCSS, and LTPP…EAFK. Composition is skewed to polar residues over residues 2180 to 2192 and 2208 to 2230; these read GKTTLLDSGSSGV and DVSSPPLMTSPFQQSPSMPLNHL. Residues 2369-2394 show a composition bias toward low complexity; it reads MQAQQMQQQQNLQLHQSMQQQHHNSS. Composition is skewed to polar residues over residues 2395–2407 and 2451–2471; these read TTSTHINSPFCSS and LTPPSQHSYSSPMDNTPSHQL. The span at 2481–2496 shows a compositional bias: low complexity; the sequence is PSPESPDQWSSSSPHS. Residues 2497–2516 are compositionally biased toward polar residues; it reads NMSDWSEGISSPPTSMQPQR.

Belongs to the NOTCH family. As to quaternary structure, forms a ternary complex with nrarp and rbpj/suh. O-glycosylated on the EGF-like domains. Contains both O-linked fucose and O-linked glucose. O-linked glycosylation by galnt11 is involved in determination of left/right symmetry: glycosylation promotes activation of notch1, possibly by promoting cleavage by adam17, modulating the balance between motile and immotile (sensory) cilia at the left-right organiser (LRO). In terms of processing, synthesized in the endoplasmic reticulum as an inactive form which is proteolytically cleaved by a furin-like convertase in the trans-Golgi network before it reaches the plasma membrane to yield an active, ligand-accessible form. Cleavage results in a C-terminal fragment N(TM) and a N-terminal fragment N(EC). Following ligand binding, it is cleaved by adam17 to yield a membrane-associated intermediate fragment called notch extracellular truncation (NEXT). Following endocytosis, this fragment is then cleaved by presenilin dependent gamma-secretase to release a Notch-derived peptide containing the intracellular domain (NICD) from the membrane.

Its subcellular location is the cell membrane. The protein localises to the nucleus. Its function is as follows. Functions as a receptor for membrane-bound ligands Jagged-1 (JAG1), Jagged-2 (JAG2) and Delta-1 (DLL1) to regulate cell-fate determination. Upon ligand activation through the released notch intracellular domain (NICD) it forms a transcriptional activator complex with RBPJ/RBPSUH and activates genes of the enhancer of split locus. Affects the implementation of differentiation, proliferation and apoptotic programs. Involved in angiogenesis; negatively regulates endothelial cell proliferation and migration and angiogenic sprouting. Involved in the maturation of both CD4(+) and CD8(+) cells in the thymus. Important for follicular differentiation and possibly cell fate selection within the follicle. During cerebellar development, functions as a receptor for neuronal DNER and is involved in the differentiation of Bergmann glia. Represses neuronal and myogenic differentiation. May play an essential role in postimplantation development, probably in some aspect of cell specification and/or differentiation. May be involved in mesoderm development, somite formation and neurogenesis. Involved in determination of left/right symmetry by modulating the balance between motile and immotile (sensory) cilia at the left-right organiser (LRO). This chain is Neurogenic locus notch homolog protein 1 (notch1), found in Xenopus laevis (African clawed frog).